The chain runs to 196 residues: Probable malonic semialdehyde reductase RutE (196 aa).

Belongs to the nitroreductase family. HadB/RutE subfamily. Requires FMN as cofactor.

The enzyme catalyses 3-hydroxypropanoate + NADP(+) = 3-oxopropanoate + NADPH + H(+). May reduce toxic product malonic semialdehyde to 3-hydroxypropionic acid, which is excreted. The chain is Probable malonic semialdehyde reductase RutE from Klebsiella pneumoniae subsp. pneumoniae (strain ATCC 700721 / MGH 78578).